We begin with the raw amino-acid sequence, 233 residues long: Probable septum site-determining protein MinC (233 aa).

Residues 98 to 123 (LTEGKEKAPRPAPSEPTPPPPPVANQ) are disordered. Residues 107–120 (RPAPSEPTPPPPPV) are compositionally biased toward pro residues.

This sequence belongs to the MinC family. Interacts with MinD and FtsZ.

Its function is as follows. Cell division inhibitor that blocks the formation of polar Z ring septums. Rapidly oscillates between the poles of the cell to destabilize FtsZ filaments that have formed before they mature into polar Z rings. Prevents FtsZ polymerization. This is Probable septum site-determining protein MinC from Klebsiella pneumoniae (strain 342).